The sequence spans 223 residues: Cytochrome c biogenesis ATP-binding export protein CcmA (223 aa).

The 223-residue stretch at 1 to 223 (MRSLACERDE…KSDMAVGNDY (223 aa)) folds into the ABC transporter domain. Residue 31 to 38 (GSNGAGKT) participates in ATP binding.

The protein belongs to the ABC transporter superfamily. CcmA exporter (TC 3.A.1.107) family. In terms of assembly, the complex is composed of two ATP-binding proteins (CcmA) and two transmembrane proteins (CcmB).

It is found in the cell inner membrane. The catalysed reaction is heme b(in) + ATP + H2O = heme b(out) + ADP + phosphate + H(+). Part of the ABC transporter complex CcmAB involved in the biogenesis of c-type cytochromes; once thought to export heme, this seems not to be the case, but its exact role is uncertain. Responsible for energy coupling to the transport system. This Saccharophagus degradans (strain 2-40 / ATCC 43961 / DSM 17024) protein is Cytochrome c biogenesis ATP-binding export protein CcmA.